Consider the following 706-residue polypeptide: Protein argonaute (706 aa).

Residues 1–108 are N-terminal domain; the sequence is MGKEALLNLY…ELFRDFLTKT (108 aa). The tract at residues 109–165 is linker L1; it reads KVKDKFISDFYKKFRDKITVQGKNRKIALIPEVNEKVLKSEEGYFLLHLDLKFRIQP. The 92-residue stretch at 168–259 folds into the PAZ domain; it reads TLQTLLERND…YPATILKPVL (92 aa). Residues 263 to 334 form a linker L2 region; the sequence is NLEDEERNEV…AKGKNTKVIT (72 aa). The tract at residues 335–448 is mid domain; the sequence is NLRKFLELCR…YDFVKRELLK (114 aa). The Piwi domain maps to 419–694; it reads LVIVFLEEYP…ITKLMLRGIE (276 aa). The tract at residues 449 to 706 is PIWI domain; sequence KMIPSQVILN…KKEGDIMYWL (258 aa). Active-site residues include Asp502, Glu541, and Asp571. Residue Asp502 participates in Mn(2+) binding. Asp571 provides a ligand contact to Mn(2+). Positions 612-650 are PIWI box; the sequence is FIKGYFYKLSEDSVILATYNQVYEGTHQPIKVRKVYGEL. Asp683 is a catalytic residue. Asp683 contacts Mn(2+).

The protein belongs to the argonaute family. Long pAgo subfamily. It depends on Mg(2+) as a cofactor.

Functionally, a DNA-guided RNA endonuclease. Uses short ssDNA sequences as guides (gDNA) to bind complementary target strands, resulting in cleavage of the target RNA. The cleavage site is 10 nucleotides downstream of the residue base paired with the 5'-end of the gDNA. Binds ssDNA better than ssRNA, binds dsDNA and DNA-RNA hybrids but does not bind dsRNA. A 2 nucleotide 3'-overhang (possibly on the guide strand) may help load nucleic acids into the complex. This Aquifex aeolicus (strain VF5) protein is Protein argonaute.